A 27-amino-acid polypeptide reads, in one-letter code: Kunitz-type serine protease inhibitor 3 (27 aa).

A BPTI/Kunitz inhibitor domain is found at 1-27; it reads EVHNFACLGKPDPGGCAHYIYRRYYYV.

The protein resides in the secreted. Functionally, inhibits bovine trypsin and human neutrophil elastase. The chain is Kunitz-type serine protease inhibitor 3 from Rhipicephalus microplus (Cattle tick).